The sequence spans 145 residues: Large ribosomal subunit protein uL16 (145 aa).

Basic residues predominate over residues Met-1–Met-17. The disordered stretch occupies residues Met-1 to Val-20.

Belongs to the universal ribosomal protein uL16 family. Part of the 50S ribosomal subunit.

Binds 23S rRNA and is also seen to make contacts with the A and possibly P site tRNAs. The polypeptide is Large ribosomal subunit protein uL16 (Acetivibrio thermocellus (strain ATCC 27405 / DSM 1237 / JCM 9322 / NBRC 103400 / NCIMB 10682 / NRRL B-4536 / VPI 7372) (Clostridium thermocellum)).